A 96-amino-acid chain; its full sequence is Protein C4 (96 aa).

A lipid anchor (N-myristoyl glycine; by host) is attached at Gly2. The segment at 66-96 (STDDLQGEDSRQPMTLTPRQLTQEVSRRLLM) is disordered. Residues 77–89 (QPMTLTPRQLTQE) are compositionally biased toward polar residues.

Belongs to the geminiviridae protein AC4/C4 family.

Its subcellular location is the host cell membrane. In terms of biological role, pathogenicity determinant. May act as a suppressor of RNA-mediated gene silencing, also known as post-transcriptional gene silencing (PTGS), a mechanism of plant viral defense that limits the accumulation of viral RNAs. The sequence is that of Protein C4 from Cynanchum acutum (Tomato).